Consider the following 140-residue polypeptide: Small ribosomal subunit protein uS12m (140 aa).

Residues 1–30 (MNFLRQSFGITKQLASQAIQCSYETAVRGM) constitute a mitochondrion transit peptide.

This sequence belongs to the universal ribosomal protein uS12 family.

The protein resides in the mitochondrion. The protein is Small ribosomal subunit protein uS12m (tko) of Drosophila melanogaster (Fruit fly).